We begin with the raw amino-acid sequence, 149 residues long: Transcriptional repressor NrdR (149 aa).

Residues 3–34 (CPFCAAVDTKVIDSRLVSDGSQVRRRRQCLDC) fold into a zinc finger. Positions 49–139 (PRVIKSDDVR…VYRSFEDIRE (91 aa)) constitute an ATP-cone domain.

The protein belongs to the NrdR family. Zn(2+) is required as a cofactor.

Functionally, negatively regulates transcription of bacterial ribonucleotide reductase nrd genes and operons by binding to NrdR-boxes. This chain is Transcriptional repressor NrdR, found in Yersinia enterocolitica serotype O:8 / biotype 1B (strain NCTC 13174 / 8081).